The sequence spans 441 residues: Mitochondrial inner membrane protein OXA1L (441 aa).

The Mitochondrial intermembrane segment spans residues 1-113; it reads MALALMCGRR…QAAAEQSFAE (113 aa). Residues 114–134 form a helical membrane-spanning segment; that stretch reads LGLGSYTPVGLIQNLLEFMHV. Topologically, residues 135–139 are mitochondrial matrix; it reads NLGLP. A helical membrane pass occupies residues 140 to 160; sequence WWGAIAACTVLARCLVFPLIV. The Mitochondrial intermembrane portion of the chain corresponds to 161–212; the sequence is KGQREAAKIHNHLPEIQKFSARIREAKLTGNHTEFYRASSEMTFYQKKHDIK. The chain crosses the membrane as a helical span at residues 213 to 233; that stretch reads LFRPLILPLTQAPIFISFFIA. Residues 234–260 lie on the Mitochondrial matrix side of the membrane; it reads LREMANLPVPSLQTGGLWWFQDLTLSD. The helical transmembrane segment at 261–281 threads the bilayer; sequence PIYVLPLVVTATMWGVLELGA. The Mitochondrial intermembrane segment spans residues 282–298; the sequence is ETGMQSSDLQWMRNFIR. Residues 299–319 traverse the membrane as a helical segment; the sequence is LMPLAVLPITIHFPTAVFMYW. Residues 320–441 lie on the Mitochondrial matrix side of the membrane; the sequence is LSSNMFSLGQ…SKQPWRDTLG (122 aa). Ser-364 bears the Phosphoserine mark. Thr-400 is modified (phosphothreonine). A disordered region spans residues 405–441; the sequence is PLLQHGKNDPPNTPNSSSSSSSSNKAKSKQPWRDTLG. A compositionally biased stretch (low complexity) spans 418–429; the sequence is PNSSSSSSSSNK.

Belongs to the OXA1/ALB3/YidC family. In terms of assembly, monomer; predominantly monomeric at low salt concentrations. Homooligomer; predominantly homooligomeric at high salt concentrations. Associates with the mitochondrial ribosome. Associates preferentially as a dimer with the large ribosomal subunit 39S of the mitochondrial ribosome. Interacts with OXA1L; promoting cotranslational quality control in mitochondria.

The protein localises to the mitochondrion inner membrane. Its function is as follows. Mitochondrial membrane insertase that mediates the cotranslational insertion of integral membrane proteins into the mitochondrial inner membrane. Essential for the activity and assembly of cytochrome oxidase. Required for the correct biogenesis of ATP synthase and complex I in mitochondria. This is Mitochondrial inner membrane protein OXA1L (OXA1L) from Bos taurus (Bovine).